Reading from the N-terminus, the 227-residue chain is Lectin (227 aa).

A signal peptide spans 1-28 (MTMTSTTTKAMAMAAAVLAAAAVAATNA). Q29 bears the Pyrrolidone carboxylic acid mark. Chitin-binding type-1 domains lie at 29–70 (QTCG…ACCS), 71–113 (SQRC…PCRA), 114–156 (DIKC…ACCP), and 157–199 (EKRC…GCYK). 16 cysteine pairs are disulfide-bonded: C31–C46, C40–C52, C45–C59, C63–C68, C74–C89, C83–C95, C88–C102, C106–C111, C117–C132, C126–C138, C131–C145, C149–C154, C160–C175, C169–C181, C174–C188, and C192–C197. A substrate-binding site is contributed by 38-40 (MIC). Position 90–101 (90–101 (SQYGYCGFGSEY)) interacts with substrate. Residue 142-143 (SE) coordinates substrate. A propeptide spanning residues 202–227 (DGMAAILANNQSVSFEGIIESVAELV) is cleaved from the precursor. Residue N211 is glycosylated (N-linked (GlcNAc...) asparagine).

Confined to root caps, several cell layers at the periphery of the coleorhiza and radicle, and in all cell layers of the coleoptile.

In terms of biological role, N-acetyl-D-glucosamine binding lectin. The protein is Lectin of Oryza sativa subsp. japonica (Rice).